A 353-amino-acid chain; its full sequence is uncharacterized protein (353 aa).

Residues D212, D223, H287, E316, and E330 each coordinate Mn(2+).

The protein belongs to the peptidase M24B family. The cofactor is Mn(2+).

This is an uncharacterized protein from Bacillus subtilis (strain 168).